A 3433-amino-acid polypeptide reads, in one-letter code: Genome polyprotein (3433 aa).

The tract at residues 2 to 15 is interaction with host EXOC1; the sequence is SKKPGGPGKSRAVN. Topologically, residues 2–105 are cytoplasmic; it reads SKKPGGPGKS…NRRSSKQKKR (104 aa). The segment at 37-72 is hydrophobic; homodimerization of capsid protein C; that stretch reads LIDGRGPTRFVLALLAFFRFTAIAPTRAVLDRWRSV. A propeptide spans 106-123 (ER anchor for the capsid protein C, removed in mature form by serine protease NS3); sequence GGKTGIAFMIGLIAGVGA. Residues 106 to 126 form a helical membrane-spanning segment; that stretch reads GGKTGIAFMIGLIAGVGAVTL. At 127–248 the chain is on the extracellular side; it reads SNFQGKVMMT…KATRYLVKTE (122 aa). A glycan (N-linked (GlcNAc...) asparagine; by host) is linked at Asn138. Residues 249-269 traverse the membrane as a helical segment; sequence SWILRNPGYALVAAVIGWMLG. The Cytoplasmic segment spans residues 270–273; sequence SNTM. A helical membrane pass occupies residues 274–290; that stretch reads QRVVFAVLLLLVAPAYS. The Extracellular portion of the chain corresponds to 291–743; sequence FNCLGMSNRD…QVFGGAFRSL (453 aa). Intrachain disulfides connect Cys293–Cys320, Cys350–Cys406, Cys364–Cys395, and Cys382–Cys411. The segment at 388–401 is fusion peptide; it reads DRGWGNGCGLFGKG. N-linked (GlcNAc...) asparagine; by host glycosylation is present at Asn444. 2 disulfide bridges follow: Cys480-Cys578 and Cys595-Cys626. The chain crosses the membrane as a helical span at residues 744–764; that stretch reads FGGMSWITQGLLGALLLWMGI. At 765-770 the chain is on the cytoplasmic side; sequence NARDRS. A helical membrane pass occupies residues 771-791; it reads IALTFLAVGGVLLFLSVNVHA. Topologically, residues 792 to 1216 are extracellular; it reads DTGCAIDISR…AFAESNSGGD (425 aa). 2 cysteine pairs are disulfide-bonded: Cys795-Cys806 and Cys846-Cys934. Residues Asn921, Asn966, and Asn998 are each glycosylated (N-linked (GlcNAc...) asparagine; by host). 4 disulfide bridges follow: Cys970–Cys1014, Cys1071–Cys1120, Cys1082–Cys1103, and Cys1104–Cys1107. The helical transmembrane segment at 1217–1237 threads the bilayer; it reads VVHLALMATFKIQPVFMVASF. The Cytoplasmic portion of the chain corresponds to 1238–1247; sequence LKARWTNQEN. The chain crosses the membrane as a helical span at residues 1248–1268; sequence ILLMLAAAFFQMAYYDARQIL. Over 1269–1288 the chain is Lumenal; it reads LWEMPDVLNSLAVAWMILRA. Residues 1289–1309 form a helical membrane-spanning segment; sequence ITFTTTSNVVVPLLALLTPGL. The Cytoplasmic portion of the chain corresponds to 1310–1316; sequence RCLNLDV. A helical membrane pass occupies residues 1317-1335; it reads YRILLLMVGIGSLIREKRS. At 1336–1345 the chain is on the lumenal side; it reads AAAKKKGASL. The chain crosses the membrane as a helical span at residues 1346 to 1366; sequence LCLALASTGFFNPMILAAGLV. Residues 1367–1375 are Cytoplasmic-facing; that stretch reads ACDPNRKRG. A helical membrane pass occupies residues 1376-1396; sequence WPATEVMTAVGLMFAIVGGLA. The Lumenal segment spans residues 1397-1399; sequence ELD. The chain crosses the membrane as a helical span at residues 1400 to 1420; that stretch reads IDSMAIPMTIAGLMFAAFVIS. Residues 1421–1477 are Cytoplasmic-facing; sequence GKSTDMWIERTADISWEGDAEITGSSERVDVRLDDDGNFQLMNDPGAPWKIWMLRMA. The segment at 1428–1467 is interacts with and activates NS3 protease; sequence IERTADISWEGDAEITGSSERVDVRLDDDGNFQLMNDPGA. Positions 1478–1498 form an intramembrane region, helical; that stretch reads CLAISAYTPWAILPSVVGFWI. At 1499-2174 the chain is on the cytoplasmic side; it reads TLQYTKRGGV…RMALEELPDA (676 aa). The Peptidase S7 domain occupies 1506–1683; it reads GGVLWDTPSP…ERMDEPVPAG (178 aa). Catalysis depends on charge relay system; for serine protease NS3 activity residues His1556, Asp1580, and Ser1640. Positions 1686–1842 constitute a Helicase ATP-binding domain; sequence PEMLRKKQIT…ESNAPISDLQ (157 aa). The segment at 1690–1693 is important for RNA-binding; the sequence is RKKQ. An ATP-binding site is contributed by 1699-1706; that stretch reads LHPGAGKT. The DEAH box motif lies at 1790–1793; that stretch reads DEAH. Residues 1853–2018 form the Helicase C-terminal domain; it reads GYEWITEYIG…GLIAQFYQPE (166 aa). Lys1894 is subject to N6-acetyllysine; by host. The regulates the ATPase activity of NS3 helicase stretch occupies residues 2169–2173; the sequence is EELPD. A helical membrane pass occupies residues 2175–2195; it reads LQTIALIALLSVMTMGVFFLL. Residues 2196 to 2200 lie on the Lumenal side of the membrane; sequence MQRKG. The segment at residues 2201–2221 is an intramembrane region (helical); sequence IGKIGLGGVVLGAATFFCWMA. Residue Glu2222 is a topological domain, lumenal. Residues 2223 to 2243 traverse the membrane as a helical segment; sequence VPGTKIAGMLLLSLLLMIVLI. At 2244-2258 the chain is on the cytoplasmic side; sequence PEPEKQRSQTDNQLA. Residues 2259 to 2273 form a helical membrane-spanning segment; it reads VFLICVLTLVGAVAA. Residues 2274–2312 are Lumenal-facing; it reads NEMGWLDKTKSDISGLFGQRIETKENFSIGEFLLDLRPA. The segment at residues 2313–2333 is an intramembrane region (helical); it reads TAWSLYAVTTAVLTPLLKHLI. Topologically, residues 2334–2380 are lumenal; that stretch reads TSDYITTSLTSINVQASALFTLARGFPFVDVGVSALLLAAGCWGQVT. A helical membrane pass occupies residues 2381-2401; that stretch reads LTVTVTSATLLFCHYAYMVPG. The Cytoplasmic portion of the chain corresponds to 2402–2444; sequence WQAEAMRSAQRRTAAGIMKNAVVDGIVATDVPELERTTPIMQK. A helical transmembrane segment spans residues 2445–2465; the sequence is KVGQVMLILVSLAALVVNPSV. Over 2466 to 2470 the chain is Lumenal; that stretch reads KTVRE. Residues 2471–2491 traverse the membrane as a helical segment; that stretch reads AGILITAAAVTLWENGASSVW. At 2492–3433 the chain is on the cytoplasmic side; that stretch reads NATTAIGLCH…DTTLVEDTVL (942 aa). The region spanning 2529-2794 is the mRNA cap 0-1 NS5-type MT domain; the sequence is GGAKGRTLGE…DVNLGSGTRA (266 aa). Ser2584 is an S-adenosyl-L-methionine binding site. At Ser2584 the chain carries Phosphoserine. The active-site For 2'-O-MTase activity is Lys2589. Positions 2614, 2615, 2632, 2633, 2659, and 2660 each coordinate S-adenosyl-L-methionine. The For 2'-O-MTase activity role is filled by Asp2674. Ile2675 is a binding site for S-adenosyl-L-methionine. Active-site for 2'-O-MTase activity residues include Lys2710 and Glu2746. Tyr2748 is an S-adenosyl-L-methionine binding site. Residues 2917–2919 carry the Nuclear localization signal motif; it reads REK. Residues Glu2968, His2972, Cys2977, and Cys2980 each contribute to the Zn(2+) site. The 153-residue stretch at 3058-3210 folds into the RdRp catalytic domain; sequence GRIYADDTAG…KPLDDRFATS (153 aa). Residues His3245, Cys3261, and Cys3380 each contribute to the Zn(2+) site. Positions 3431–3433 match the PDZ-binding motif; that stretch reads TVL.

It in the N-terminal section; belongs to the class I-like SAM-binding methyltransferase superfamily. mRNA cap 0-1 NS5-type methyltransferase family. Homodimer; further assembles as a homotetramer. Interacts (via N-terminus) with host EXOC1 (via C-terminus); this interaction results in EXOC1 degradation through the proteasome degradation pathway. As to quaternary structure, forms heterodimers with envelope protein E in the endoplasmic reticulum and Golgi. In terms of assembly, homodimer; in the endoplasmic reticulum and Golgi. Interacts with protein prM. Interacts with non-structural protein 1. Homodimer; Homohexamer when secreted. Interacts with envelope protein E. NS1 interacts with NS4B. Interacts with host complement protein CFH; this interaction leads to the degradation of C3. As to quaternary structure, interacts (via N-terminus) with serine protease NS3. In terms of assembly, forms a heterodimer with serine protease NS3. May form homooligomers. Forms a heterodimer with NS2B. Interacts with non-structural protein 2A (via N-terminus). Interacts with NS4B. Interacts with unphosphorylated RNA-directed RNA polymerase NS5; this interaction stimulates RNA-directed RNA polymerase NS5 guanylyltransferase activity. As to quaternary structure, interacts with Serine protease/Helicase NS3. Interacts with NS1. In terms of assembly, homodimer. Interacts with host STAT2; this interaction inhibits the phosphorylation of the latter, and, when all viral proteins are present (polyprotein), targets STAT2 for degradation. Interacts with serine protease NS3. Post-translationally, specific enzymatic cleavages in vivo yield mature proteins. Cleavages in the lumen of endoplasmic reticulum are performed by host signal peptidase, whereas cleavages in the cytoplasmic side are performed by serine protease NS3. Signal cleavage at the 2K-4B site requires a prior NS3 protease-mediated cleavage at the 4A-2K site. In terms of processing, cleaved in post-Golgi vesicles by a host furin, releasing the mature small envelope protein M, and peptide pr. This cleavage is incomplete as up to 30% of viral particles still carry uncleaved prM. N-glycosylated. Post-translationally, N-glycosylated. The excreted form is glycosylated and this is required for efficient secretion of the protein from infected cells. In terms of processing, acetylated by host KAT5. Acetylation modulates NS3 RNA-binding and unwinding activities and plays an important positive role for viral replication. Phosphorylated on serines residues. This phosphorylation may trigger NS5 nuclear localization.

Its subcellular location is the virion. It is found in the host nucleus. It localises to the host cytoplasm. The protein localises to the host perinuclear region. The protein resides in the secreted. Its subcellular location is the virion membrane. It is found in the host endoplasmic reticulum membrane. The enzyme catalyses Selective hydrolysis of -Xaa-Xaa-|-Yaa- bonds in which each of the Xaa can be either Arg or Lys and Yaa can be either Ser or Ala.. It carries out the reaction RNA(n) + a ribonucleoside 5'-triphosphate = RNA(n+1) + diphosphate. The catalysed reaction is a ribonucleoside 5'-triphosphate + H2O = a ribonucleoside 5'-diphosphate + phosphate + H(+). It catalyses the reaction ATP + H2O = ADP + phosphate + H(+). The enzyme catalyses a 5'-end (5'-triphosphoguanosine)-ribonucleoside in mRNA + S-adenosyl-L-methionine = a 5'-end (N(7)-methyl 5'-triphosphoguanosine)-ribonucleoside in mRNA + S-adenosyl-L-homocysteine. It carries out the reaction a 5'-end (N(7)-methyl 5'-triphosphoguanosine)-ribonucleoside in mRNA + S-adenosyl-L-methionine = a 5'-end (N(7)-methyl 5'-triphosphoguanosine)-(2'-O-methyl-ribonucleoside) in mRNA + S-adenosyl-L-homocysteine + H(+). Functionally, plays a role in virus budding by binding to the cell membrane and gathering the viral RNA into a nucleocapsid that forms the core of a mature virus particle. During virus entry, may induce genome penetration into the host cytoplasm after hemifusion induced by the surface proteins. Can migrate to the cell nucleus where it modulates host functions. Overcomes the anti-viral effects of host EXOC1 by sequestering and degrading the latter through the proteasome degradation pathway. Inhibits RNA silencing by interfering with host Dicer. Its function is as follows. Prevents premature fusion activity of envelope proteins in trans-Golgi by binding to envelope protein E at pH6.0. After virion release in extracellular space, gets dissociated from E dimers. In terms of biological role, acts as a chaperone for envelope protein E during intracellular virion assembly by masking and inactivating envelope protein E fusion peptide. prM is the only viral peptide matured by host furin in the trans-Golgi network probably to avoid catastrophic activation of the viral fusion activity in acidic Golgi compartment prior to virion release. prM-E cleavage is inefficient, and many virions are only partially matured. These uncleaved prM would play a role in immune evasion. Functionally, may play a role in virus budding. Exerts cytotoxic effects by activating a mitochondrial apoptotic pathway through M ectodomain. May display a viroporin activity. Binds to host cell surface receptor and mediates fusion between viral and cellular membranes. Envelope protein is synthesized in the endoplasmic reticulum in the form of heterodimer with protein prM. They play a role in virion budding in the ER, and the newly formed immature particle is covered with 60 spikes composed of heterodimer between precursor prM and envelope protein E. The virion is transported to the Golgi apparatus where the low pH causes dissociation of PrM-E heterodimers and formation of E homodimers. prM-E cleavage is inefficient, and many virions are only partially matured. These uncleaved prM would play a role in immune evasion. Its function is as follows. Involved in immune evasion, pathogenesis and viral replication. Once cleaved off the polyprotein, is targeted to three destinations: the viral replication cycle, the plasma membrane and the extracellular compartment. Essential for viral replication. Required for formation of the replication complex and recruitment of other non-structural proteins to the ER-derived membrane structures. Excreted as a hexameric lipoparticle that plays a role against host immune response. Antagonizing the complement function. Binds to the host macrophages and dendritic cells. Inhibits signal transduction originating from Toll-like receptor 3 (TLR3). In terms of biological role, component of the viral RNA replication complex that functions in virion assembly and antagonizes the host alpha/beta interferon antiviral response. Inhibits STAT2 translocation in the nucleus after IFN-alpha treatment. Functionally, required cofactor for the serine protease function of NS3. May have membrane-destabilizing activity and form viroporins. Inhibits STAT2 translocation in the nucleus after IFN-alpha treatment. Displays three enzymatic activities: serine protease, NTPase and RNA helicase. NS3 serine protease, in association with NS2B, performs its autocleavage and cleaves the polyprotein at dibasic sites in the cytoplasm: C-prM, NS2A-NS2B, NS2B-NS3, NS3-NS4A, NS4A-2K and NS4B-NS5. NS3 RNA helicase binds RNA and unwinds dsRNA in the 3' to 5' direction. NS3 supports the separation of RNA daughter and template strands during viral replication. The helicase part is involved in the inhibition of phosphorylation of host STAT1, and thereby inhibition of host type-I IFN signaling. In addition, NS3 assists the initiation of replication by unwinding the RNA secondary structure in the 3' non-translated region (NTR). Inhibits STAT2 translocation in the nucleus after IFN-alpha treatment. Its function is as follows. Regulates the ATPase activity of the NS3 helicase activity. NS4A allows NS3 helicase to conserve energy during unwinding. Induces host ER membrane rearrangements to provide a compartment where viral replication can take part. Inhibits STAT2 translocation in the nucleus after IFN-alpha treatment. In terms of biological role, functions as a signal peptide for NS4B and is required for the interferon antagonism activity of the latter. Functionally, induces the formation of ER-derived membrane vesicles where the viral replication takes place. Inhibits interferon (IFN)-induced host STAT1 phosphorylation and nuclear translocation, thereby preventing the establishment of cellular antiviral state by blocking the IFN-alpha/beta pathway. Inhibits STAT2 translocation in the nucleus after IFN-alpha treatment. Replicates the viral (+) and (-) genome, and performs the capping of genomes in the cytoplasm. NS5 methylates viral RNA cap at guanine N-7 and ribose 2'-O positions. Besides its role in genome replication, also prevents the establishment of cellular antiviral state by blocking the interferon-alpha/beta (IFN-alpha/beta) signaling pathway. Inhibits host JAK1 and TYK2 phosphorylation, thereby preventing activation of JAK-STAT signaling pathway. May transcriptionally regulate host genes involved in antiviral response when localized in the nucleus. The sequence is that of Genome polyprotein from Ciconiiformes (storks and others).